Here is a 158-residue protein sequence, read N- to C-terminus: NAD(P)H-quinone oxidoreductase subunit J, chloroplastic (158 aa).

It belongs to the complex I 30 kDa subunit family. As to quaternary structure, NDH is composed of at least 16 different subunits, 5 of which are encoded in the nucleus.

The protein resides in the plastid. Its subcellular location is the chloroplast thylakoid membrane. It catalyses the reaction a plastoquinone + NADH + (n+1) H(+)(in) = a plastoquinol + NAD(+) + n H(+)(out). The enzyme catalyses a plastoquinone + NADPH + (n+1) H(+)(in) = a plastoquinol + NADP(+) + n H(+)(out). NDH shuttles electrons from NAD(P)H:plastoquinone, via FMN and iron-sulfur (Fe-S) centers, to quinones in the photosynthetic chain and possibly in a chloroplast respiratory chain. The immediate electron acceptor for the enzyme in this species is believed to be plastoquinone. Couples the redox reaction to proton translocation, and thus conserves the redox energy in a proton gradient. This chain is NAD(P)H-quinone oxidoreductase subunit J, chloroplastic, found in Jasminum nudiflorum (Winter jasmine).